Here is a 123-residue protein sequence, read N- to C-terminus: UPF0231 protein plu3616 (123 aa).

Belongs to the UPF0231 family.

This Photorhabdus laumondii subsp. laumondii (strain DSM 15139 / CIP 105565 / TT01) (Photorhabdus luminescens subsp. laumondii) protein is UPF0231 protein plu3616.